Consider the following 354-residue polypeptide: Ribosomal RNA large subunit methyltransferase M (354 aa).

S-adenosyl-L-methionine contacts are provided by residues Ser183, 216 to 219, Asp235, Asp255, and Asp271; that span reads SPGG. Catalysis depends on Lys300, which acts as the Proton acceptor.

This sequence belongs to the class I-like SAM-binding methyltransferase superfamily. RNA methyltransferase RlmE family. RlmM subfamily. Monomer.

The protein localises to the cytoplasm. It carries out the reaction cytidine(2498) in 23S rRNA + S-adenosyl-L-methionine = 2'-O-methylcytidine(2498) in 23S rRNA + S-adenosyl-L-homocysteine + H(+). Functionally, catalyzes the 2'-O-methylation at nucleotide C2498 in 23S rRNA. The chain is Ribosomal RNA large subunit methyltransferase M from Pseudomonas putida (strain GB-1).